Reading from the N-terminus, the 143-residue chain is Interleukin-3 (143 aa).

A signal peptide spans 1–19; sequence MSRLPVLLLLHLLVSPGLQ. A disulfide bond links C35 and C103. N89 carries an N-linked (GlcNAc...) asparagine glycan.

This sequence belongs to the IL-3 family. As to quaternary structure, monomer. Activated T-cells, mast cells, natural killer cells.

It is found in the secreted. In terms of biological role, granulocyte/macrophage colony-stimulating factors are cytokines that act in hematopoiesis by controlling the production, differentiation, and function of 2 related white cell populations of the blood, the granulocytes and the monocytes-macrophages. This CSF induces granulocytes, macrophages, mast cells, stem cells, erythroid cells, eosinophils and megakaryocytes. The protein is Interleukin-3 (IL3) of Macaca mulatta (Rhesus macaque).